A 1249-amino-acid polypeptide reads, in one-letter code: MSSMWSEYTIGGVKIYFPYKAYPSQLAMMNSILRGLNSKQHCLLESPTGSGKSLALLCSALAWQQSLSGKPADEGVSEKAEVQLSCCCACHSKDFTNNDMNQGTSRHFNYPSTPPSERNGTSSTCQDSPEKTTLAAKLSAKKQASIYRDENDDFQVEKKRIRPLETTQQIRKRHCFGTEVHNLDAKVDSGKTVKLNSPLEKINSFSPQKPPGHCSRCCCSTKQGNSQESSNTIKKDHTGKSKIPKIYFGTRTHKQIAQITRELRRTAYSGVPMTILSSRDHTCVHPEVVGNFNRNEKCMELLDGKNGKSCYFYHGVHKISDQHTLQTFQGMCKAWDIEELVSLGKKLKACPYYTARELIQDADIIFCPYNYLLDAQIRESMDLNLKEQVVILDEAHNIEDCARESASYSVTEVQLRFARDELDSMVNNNIRKKDHEPLRAVCCSLINWLEANAEYLVERDYESACKIWSGNEMLLTLHKMGITTATFPILQGHFSAVLQKEEKISPIYGKEEAREVPVISASTQIMLKGLFMVLDYLFRQNSRFADDYKIAIQQTYSWTNQIDISDKNGLLVLPKNKKRSRQKTAVHVLNFWCLNPAVAFSDINGKVQTIVLTSGTLSPMKSFSSELGVTFTIQLEANHIIKNSQVWVGTIGSGPKGRNLCATFQNTETFEFQDEVGALLLSVCQTVSQGILCFLPSYKLLEKLKERWLSTGLWHNLELVKTVIVEPQGGEKTNFDELLQVYYDAIKYKGEKDGALLVAVCRGKVSEGLDFSDDNARAVITIGIPFPNVKDLQVELKRQYNDHHSKLRGLLPGRQWYEIQAYRALNQALGRCIRHRNDWGALILVDDRFRNNPSRYISGLSKWVRQQIQHHSTFESALESLAEFSKKHQKVLNVSIKDRTNIQDNESTLEVTSLKYSTSPYLLEAASHLSPENFVEDEAKICVQELQCPKIITKNSPLPSSIISRKEKNDPVFLEEAGKAEKIVISRSTSPTFNKQTKRVSWSSFNSLGQYFTGKIPKATPELGSSENSASSPPRFKTEKMESKTVLPFTDKCESSNLTVNTSFGSCPQSETIISSLKIDATLTRKNHSEHPLCSEEALDPDIELSLVSEEDKQSTSNRDFETEAEDESIYFTPELYDPEDTDEEKNDLAETDRGNRLANNSDCILAKDLFEIRTIKEVDSAREVKAEDCIDTKLNGILHIEESKIDDIDGNVKTTWINELELGKTHEIEIKNFKPSPSKNKGMFPGFK.

The Helicase ATP-binding domain maps to 11–442 (GGVKIYFPYK…KDHEPLRAVC (432 aa)). The span at 102–127 (QGTSRHFNYPSTPPSERNGTSSTCQD) shows a compositional bias: polar residues. Residues 102-131 (QGTSRHFNYPSTPPSERNGTSSTCQDSPEK) form a disordered region. Positions 158 to 175 (KKRIRPLETTQQIRKRHC) match the Nuclear localization signal motif. 185 to 192 (AKVDSGKT) is a binding site for ATP. [4Fe-4S] cluster-binding residues include Cys283, Cys298, Cys310, and Cys350. Positions 393-396 (DEAH) match the DEAH box motif. A phosphoserine mark is found at Ser505, Ser927, Ser930, Ser956, Ser990, Ser1004, and Ser1032. An interaction with BRCA1 region spans residues 888–1063 (HQKVLNVSIK…ESSNLTVNTS (176 aa)). Disordered regions lie at residues 1018–1042 (KATP…EKME) and 1108–1127 (VSEE…EAED). Residues 1023–1032 (LGSSENSASS) are compositionally biased toward polar residues. The segment covering 1110 to 1122 (EEDKQSTSNRDFE) has biased composition (basic and acidic residues). Position 1237 is a phosphoserine (Ser1237). Residue Lys1249 is modified to N6-acetyllysine.

The protein belongs to the DEAD box helicase family. DEAH subfamily. As to quaternary structure, interacts with the replication protein A complex (RPA) via the RPA1 subunit; following DNA damage they colocalize in foci in the nucleus. Binds directly to the BRCT domains of BRCA1. Interacts with the CIA complex components CIAO1, CIAO2B and MMS19. [4Fe-4S] cluster is required as a cofactor. Post-translationally, phosphorylated. Phosphorylation is necessary for interaction with BRCA1, and is cell-cycle regulated. In terms of processing, acetylation at Lys-1249 facilitates DNA end processing required for repair and checkpoint signaling. As to expression, ubiquitously expressed, with highest levels in testis.

Its subcellular location is the nucleus. It localises to the cytoplasm. It carries out the reaction Couples ATP hydrolysis with the unwinding of duplex DNA at the replication fork by translocating in the 5'-3' direction. This creates two antiparallel DNA single strands (ssDNA). The leading ssDNA polymer is the template for DNA polymerase III holoenzyme which synthesizes a continuous strand.. The enzyme catalyses ATP + H2O = ADP + phosphate + H(+). Its activity is regulated as follows. Helicase activity on forked substrates is stimulated by replication protein A complex heterotrimer (RPA1, RPA2, RPA3). Helicase activity on G-quadruplex DNA is stimulated 3-fold by RPA, and inhibited by MSH2/MSH6. Unwinding of G-quadruplex DNA is inhibited by ATP-gamma-S and telomestatin (TMS); TMA does not inhibit unwinding of forked-duplex DNA. Helicase activity on dsDNA and G-quadruplex DNA is inhibited by porphyrin derivatives meso-tetra (N-methyl-4-pyridyl) porphine tetra tosylate (T4) and N-methyl mesoporphyrin IX (NMM). DNA-dependent ATPase and 5'-3' DNA helicase required for the maintenance of chromosomal stability. Acts late in the Fanconi anemia pathway, after FANCD2 ubiquitination. Involved in the repair of DNA double-strand breaks by homologous recombination in a manner that depends on its association with BRCA1. Involved in the repair of abasic sites at replication forks by promoting the degradation of DNA-protein cross-links: acts by catalyzing unfolding of HMCES DNA-protein cross-link via its helicase activity, exposing the underlying DNA and enabling cleavage of the DNA-protein adduct by the SPRTN metalloprotease. Can unwind RNA:DNA substrates. Unwinds G-quadruplex DNA; unwinding requires a 5'-single stranded tail. This is Fanconi anemia group J protein from Homo sapiens (Human).